The primary structure comprises 248 residues: Ras-like protein family member 11B (248 aa).

The tract at residues 30–248 is small GTPase-like; that stretch reads ASSRVIKIAV…SSKVRTATSV (219 aa). GTP contacts are provided by residues 41 to 48, 88 to 99, and 153 to 156; these read GGSGVGKT, DTPGVQINEQNL, and NKAD. Residues 206-228 form a disordered region; it reads QNTGTSERRKNSIIPRPKSPNMQ.

It belongs to the small GTPase superfamily. Ras family.

It carries out the reaction GTP + H2O = GDP + phosphate + H(+). This Xenopus laevis (African clawed frog) protein is Ras-like protein family member 11B.